The sequence spans 210 residues: Large ribosomal subunit protein uL4 (210 aa).

A compositionally biased stretch (polar residues) spans 47 to 64; the sequence is SRQGTRSQKSRSEVSGSN. Residues 47–83 are disordered; the sequence is SRQGTRSQKSRSEVSGSNKKPWRQKGTGRARSGSVKS.

Belongs to the universal ribosomal protein uL4 family. Part of the 50S ribosomal subunit.

Functionally, one of the primary rRNA binding proteins, this protein initially binds near the 5'-end of the 23S rRNA. It is important during the early stages of 50S assembly. It makes multiple contacts with different domains of the 23S rRNA in the assembled 50S subunit and ribosome. Forms part of the polypeptide exit tunnel. This chain is Large ribosomal subunit protein uL4, found in Blochmanniella pennsylvanica (strain BPEN).